The following is a 94-amino-acid chain: Acylphosphatase (94 aa).

Residues 8–94 (RFTARVVGRV…QGDLADFRRK (87 aa)) form the Acylphosphatase-like domain. Catalysis depends on residues arginine 23 and asparagine 41.

It belongs to the acylphosphatase family.

It carries out the reaction an acyl phosphate + H2O = a carboxylate + phosphate + H(+). This chain is Acylphosphatase (acyP), found in Frankia alni (strain DSM 45986 / CECT 9034 / ACN14a).